A 167-amino-acid chain; its full sequence is Small ribosomal subunit protein uS5 (167 aa).

An S5 DRBM domain is found at 12-75 (IEDRVVAINR…ETARKSLIEV (64 aa)).

The protein belongs to the universal ribosomal protein uS5 family. In terms of assembly, part of the 30S ribosomal subunit. Contacts proteins S4 and S8.

With S4 and S12 plays an important role in translational accuracy. In terms of biological role, located at the back of the 30S subunit body where it stabilizes the conformation of the head with respect to the body. The polypeptide is Small ribosomal subunit protein uS5 (Pediococcus pentosaceus (strain ATCC 25745 / CCUG 21536 / LMG 10740 / 183-1w)).